Consider the following 407-residue polypeptide: Putative serine/threonine-protein kinase C01C4.3 (407 aa).

Over residues 33–57 (NQLQNHPPRNATQSPQRQPRTSESS) the composition is skewed to polar residues. The interval 33–68 (NQLQNHPPRNATQSPQRQPRTSESSMDFPRSALRRN) is disordered. Residues 126–397 (YTVNKQLGTG…RKCLAKEKLL (272 aa)) form the Protein kinase domain. ATP is bound by residues 132–140 (LGTGRFGFI) and Lys-155. The active-site Proton acceptor is Asn-251.

Belongs to the protein kinase superfamily. Ser/Thr protein kinase family.

The enzyme catalyses L-seryl-[protein] + ATP = O-phospho-L-seryl-[protein] + ADP + H(+). It catalyses the reaction L-threonyl-[protein] + ATP = O-phospho-L-threonyl-[protein] + ADP + H(+). The chain is Putative serine/threonine-protein kinase C01C4.3 from Caenorhabditis elegans.